Here is a 248-residue protein sequence, read N- to C-terminus: Octanoyltransferase (248 aa).

Positions A53–S234 constitute a BPL/LPL catalytic domain. Residues R93–H100, A165–G167, and G178–S180 each bind substrate. C196 serves as the catalytic Acyl-thioester intermediate.

Belongs to the LipB family.

The protein resides in the cytoplasm. It carries out the reaction octanoyl-[ACP] + L-lysyl-[protein] = N(6)-octanoyl-L-lysyl-[protein] + holo-[ACP] + H(+). It participates in protein modification; protein lipoylation via endogenous pathway; protein N(6)-(lipoyl)lysine from octanoyl-[acyl-carrier-protein]: step 1/2. Functionally, catalyzes the transfer of endogenously produced octanoic acid from octanoyl-acyl-carrier-protein onto the lipoyl domains of lipoate-dependent enzymes. Lipoyl-ACP can also act as a substrate although octanoyl-ACP is likely to be the physiological substrate. The protein is Octanoyltransferase of Burkholderia multivorans (strain ATCC 17616 / 249).